The chain runs to 1178 residues: DNA-directed RNA polymerase subunit beta' (1178 aa).

The Zn(2+) site is built by cysteine 60, cysteine 62, cysteine 75, and cysteine 78. The Mg(2+) site is built by aspartate 450, aspartate 452, and aspartate 454. The Zn(2+) site is built by cysteine 795, cysteine 869, cysteine 876, and cysteine 879.

Belongs to the RNA polymerase beta' chain family. In terms of assembly, the RNAP catalytic core consists of 2 alpha, 1 beta, 1 beta' and 1 omega subunit. When a sigma factor is associated with the core the holoenzyme is formed, which can initiate transcription. The cofactor is Mg(2+). It depends on Zn(2+) as a cofactor.

The catalysed reaction is RNA(n) + a ribonucleoside 5'-triphosphate = RNA(n+1) + diphosphate. Functionally, DNA-dependent RNA polymerase catalyzes the transcription of DNA into RNA using the four ribonucleoside triphosphates as substrates. The protein is DNA-directed RNA polymerase subunit beta' of Clostridium botulinum (strain Loch Maree / Type A3).